A 437-amino-acid polypeptide reads, in one-letter code: MKGTGLNNFPQFGVMEGVKILVCGGAIAGPFGATLLGEIGAEVVHFESPKNPDSVRGHYGYSQNHRNQLSMVADMKTPEGLEIFKKLIKWTDIFIESSKGGTYEKMGLTDEVLWEINPRLAIVHVSGFGQTGVPEYIDRASYDAVGQAFSGYMSFNGTPKEAMKVSPYLSDYVTALNTCWTALAAYVHVLRTGKGESVDVAQYESLARILDTRPMEYFTDGKEFPRTGNKDTQAALFSFYTCKDGGEIFIGMNGYGPVRRGYPLIGLPKPGDGDPEIDEILSGWMADTDLGRRLEAAMEKFVSEHTVDEVEKIMLENQIPCLKVYTLKDCAKDPHWKARDIFVEWDDPMMGRVKGLGIINKWKNNPGEIKWGAPLFGENNEEVLKDLGYTEEEIEDFAKRGITASFDFDQTYEIYKLEELFPHYREGFTERWKKEEE.

Asp-171 acts as the Nucleophile in catalysis.

Belongs to the CoA-transferase III family.

It carries out the reaction deoxycholoyl-CoA + cholate = choloyl-CoA + deoxycholate. The enzyme catalyses allodeoxycholoyl-CoA + cholate = allodeoxycholate + choloyl-CoA. It catalyses the reaction allocholate + deoxycholoyl-CoA = allocholoyl-CoA + deoxycholate. The catalysed reaction is allocholate + allodeoxycholoyl-CoA = allocholoyl-CoA + allodeoxycholate. It carries out the reaction ursodeoxycholate + deoxycholoyl-CoA = ursodeoxycholoyl-CoA + deoxycholate. The enzyme catalyses allodeoxycholoyl-CoA + ursodeoxycholate = ursodeoxycholoyl-CoA + allodeoxycholate. The protein operates within lipid metabolism; bile acid biosynthesis. Functions in the bile acid 7alpha-dehydroxylation pathway, which forms secondary bile acids via the 7alpha-dehydroxylation of primary bile acids, and is carried out by intestinal anaerobic bacteria. Acts as a bile acid CoA transferase with broad bile acid substrate specificity. Catalyzes the transfer of the CoA moiety of secondary bile acid-CoA compounds to primary bile acids. Can use deoxycholoyl-CoA and allodeoxycholoyl-CoA as bile acid CoA donors and cholate, allocholate and ursodeoxycholate as bile acid CoA acceptors. Shows no activity when lithocholoyl-CoA is used as the CoA donor. The polypeptide is Bile acid CoA-transferase BaiK (Clostridium scindens (strain JCM 10418 / VPI 12708)).